The following is an 821-amino-acid chain: Calpain-3 (821 aa).

The interval 7–37 (ASVAPRTAAEPRSPGPVPHPAQSKATEAGGG) is disordered. Residues 74–417 (LYVDPEFPPD…FTKLEICNLT (344 aa)) enclose the Calpain catalytic domain. Residues C129, H334, and N358 contribute to the active site. The domain III stretch occupies residues 418–586 (ADALQSDKLQ…KRNLSEEVEN (169 aa)). Residues 587 to 649 (TISVDRPVKK…QPGSSDQESE (63 aa)) form a linker region. The tract at residues 609–652 (ANSNKELGVDQESEEGKGKTSPDKQKQSPQPQPGSSDQESEEQQ) is disordered. Basic and acidic residues predominate over residues 622–634 (EEGKGKTSPDKQK). Residues 635–645 (QSPQPQPGSSD) are compositionally biased toward low complexity. 4 consecutive EF-hand domains span residues 649 to 683 (EEQQQFRNIFKQIAGDDMEICADELKKVLNTVVNK), 692 to 725 (FTLESCRSMIALMDTDGSGKLNLQEFHHLWNKIK), 722 to 757 (NKIKAWQKIFKHYDTDQSGTINSYEMRNAVNDAGFH), and 787 to 821 (VRLEGMFRAFHAFDKDGDGIIKLNVLEWLQLTMYA). The interval 650 to 821 (EQQQFRNIFK…LEWLQLTMYA (172 aa)) is domain IV. A662, D665, E667, E672, D705, D707, S709, K711, E716, D735, D737, S739, T741, E746, D800, D802, D804, and I806 together coordinate Ca(2+).

This sequence belongs to the peptidase C2 family. As to quaternary structure, homodimer; via EF-hand domain 4. Interacts with TTN/titin. Interacts with CMYA5; this interaction, which results in CMYA5 proteolysis, may protect CAPN3 from autolysis. Interacts with SIMC1. Interacts with UTP25; the interaction is required for CAPN3 translocation to the nucleolus. In terms of tissue distribution, isoform I is skeletal muscle specific.

The protein resides in the cytoplasm. It is found in the nucleus. Its subcellular location is the nucleolus. It carries out the reaction Broad endopeptidase activity.. With respect to regulation, activated by micromolar concentrations of calcium and inhibited by calpastatin. Functionally, calcium-regulated non-lysosomal thiol-protease. Proteolytically cleaves CTBP1 at 'His-409'. Mediates, with UTP25, the proteasome-independent degradation of p53/TP53. This chain is Calpain-3, found in Homo sapiens (Human).